Reading from the N-terminus, the 205-residue chain is uncharacterized protein (205 aa).

Belongs to the flavoredoxin family. The cofactor is FMN.

This is an uncharacterized protein from Bacillus subtilis (strain 168).